A 173-amino-acid chain; its full sequence is uncharacterized protein (173 aa).

4 helical membrane passes run 9 to 29 (FSIC…LLCV), 32 to 52 (ICSA…TFFH), 100 to 120 (MFLC…SFIV), and 127 to 147 (FLFL…GLYP).

It is found in the membrane. This is an uncharacterized protein from Saccharomyces cerevisiae (strain ATCC 204508 / S288c) (Baker's yeast).